The primary structure comprises 200 residues: Small ribosomal subunit protein uS4 (200 aa).

Positions 22-41 (TGKEIEKRPYAPGQHGPNQR) are disordered. Positions 92–152 (TRLDNLVYRL…EKSQNLAVVG (61 aa)) constitute an S4 RNA-binding domain.

It belongs to the universal ribosomal protein uS4 family. As to quaternary structure, part of the 30S ribosomal subunit. Contacts protein S5. The interaction surface between S4 and S5 is involved in control of translational fidelity.

In terms of biological role, one of the primary rRNA binding proteins, it binds directly to 16S rRNA where it nucleates assembly of the body of the 30S subunit. Its function is as follows. With S5 and S12 plays an important role in translational accuracy. This chain is Small ribosomal subunit protein uS4, found in Lysinibacillus sphaericus (strain C3-41).